Here is a 1681-residue protein sequence, read N- to C-terminus: Sodium channel protein type 7 subunit alpha (1681 aa).

Residues 1–118 (MLTSPEPKGL…RRAAIKALVH (118 aa)) are Cytoplasmic-facing. Residues 101 to 402 (TLSPLNSLRR…ILTMTYEKEK (302 aa)) form an I repeat. A helical transmembrane segment spans residues 119–138 (PLFRLLILISVLTDSILMCM). The Extracellular portion of the chain corresponds to 139 to 142 (SNLP). The chain crosses the membrane as a helical span at residues 143–168 (EWILAIENTLLGIYAFEILVKVIARG). The Cytoplasmic segment spans residues 169-179 (IWAGSFSFLGD). The helical transmembrane segment at 180-197 (LWNWLDFSVTLFELITRF) threads the bilayer. Topologically, residues 198–201 (SPLS) are extracellular. A helical membrane pass occupies residues 202-220 (SFLMLKTIRTFRILKIIPL). Residues 221–238 (NHGLQSIVMTLAQCLKKL) are Cytoplasmic-facing. A helical membrane pass occupies residues 239–260 (FGAIALALFFLAVFSLLGMGLF). Over 261 to 339 (MGNLKHKCLR…PDNGFTSFDN (79 aa)) the chain is Extracellular. A disulfide bridge connects residues cysteine 268 and cysteine 308. Asparagine 277, asparagine 282, asparagine 288, and asparagine 310 each carry an N-linked (GlcNAc...) asparagine glycan. An intramembrane region (pore-forming) is located at residues 340-367 (FGWSLLAMFRLMTQDYPELLYHQILYAS). Glycine 368 is a topological domain (extracellular). The chain crosses the membrane as a helical span at residues 369-408 (KVYMIFFVMISFWFAFYLTSLFLGILTMTYEKEKQRACEE). The Cytoplasmic segment spans residues 409-506 (SGGLDPKCQQ…EFADRVITHP (98 aa)). The stretch at 488–757 (CSPCWVKLNE…QLAMARIKSG (270 aa)) is one II repeat. The chain crosses the membrane as a helical span at residues 507–522 (LADLFLVICIVLNICF). Topologically, residues 523-531 (LALEHFPMS) are extracellular. The helical transmembrane segment at 532–560 (EELRSLLHVGNLVFIGIYTIEMILKIIAM) threads the bilayer. The Cytoplasmic segment spans residues 561 to 569 (HPYGYFQIS). The helical transmembrane segment at 570–587 (WNIFDSILVVLELTEILL) threads the bilayer. At 588–593 (ADVEGL) the chain is on the extracellular side. Residues 594-609 (AVLITVPLIFIKLGKY) traverse the membrane as a helical segment. Topologically, residues 610–626 (GPPFKSLMRILGSSLMA) are cytoplasmic. The helical transmembrane segment at 627–655 (LKDLVLLLCIFVYFSAVFGMKLFGRSYKD) threads the bilayer. Residues 656–673 (CVCHIKEDCQPQRWHMSD) lie on the Extracellular side of the membrane. 2 disulfide bridges follow: cysteine 658-cysteine 664 and cysteine 696-cysteine 705. Positions 674 to 700 (FLHAYMTVFRILCGEWIETLWECMEVA) form an intramembrane region, pore-forming. Position 701 (glycine 701) is a topological domain, extracellular. Residues 702-732 (QAWCIPFYMMVILIGNLLILYLFVTLVSSFS) form a helical membrane-spanning segment. The Cytoplasmic segment spans residues 733-934 (YYDATSEVNK…KTCCKIVENS (202 aa)). Positions 806–834 (YKDQSSSTEKTPVTESESQSLIASPSASE) are enriched in polar residues. The interval 806–875 (YKDQSSSTEK…MKQSSSSECS (70 aa)) is disordered. Serine 843 bears the Phosphoserine mark. The stretch at 916-1224 (NGKIWKNIRK…KKQYRALKKL (309 aa)) is one III repeat. A helical membrane pass occupies residues 935–953 (WFECFIGLVTLLCTGTLAL). At 954-961 (EDIYIDQR) the chain is on the extracellular side. Residues 962–990 (KTTKILLEYADMIFAYIFILEMLLKWVAY) form a helical membrane-spanning segment. Topologically, residues 991–998 (GFKAFFSN) are cytoplasmic. The helical transmembrane segment at 999–1020 (NWYKLDFMVVIVFCLSLIGKTR) threads the bilayer. Glutamate 1021 is a topological domain (extracellular). A helical membrane pass occupies residues 1022 to 1040 (DLNPLTSIKFLRALRVLSQ). At 1041-1055 (FERMKVVLRALIKTT) the chain is on the cytoplasmic side. A helical membrane pass occupies residues 1056 to 1080 (LPTVSVFLVCLMIWLLFSVIGVQLF). The Extracellular segment spans residues 1081-1127 (AGKFYECIDPTKGERFPVFEVMNKSQCEKLLFNESMPWENAKLNFDN). Cysteine 1087 and cysteine 1107 are joined by a disulfide. Residues asparagine 1103 and asparagine 1113 are each glycosylated (N-linked (GlcNAc...) asparagine). Positions 1128 to 1154 (VGNGFLSLLQVATFNGWISIMNSAIDS) form an intramembrane region, pore-forming. Topologically, residues 1155 to 1167 (VGVNMQPSFEYNL) are extracellular. Residues 1168–1202 (YMYSYFIIFVIFGLFLPLCMLIGVIIRNFNKQKIK) traverse the membrane as a helical segment. Residues 1203–1250 (QGGSNIFITVKQKKQYRALKKLLYADVQKPTPRPRNKFQGFLFDLVTH) lie on the Cytoplasmic side of the membrane. Residues 1233-1531 (TPRPRNKFQG…WNRFDPDRTQ (299 aa)) form an IV repeat. Residues 1251–1272 (RVFNVIIILLICFQATTIMIQK) form a helical membrane-spanning segment. Residues 1273–1276 (DEQS) lie on the Extracellular side of the membrane. Residues 1277-1305 (PQMETAIFWMNSIFVMLFTLECILKLTAF) form a helical membrane-spanning segment. Over 1306–1312 (RCHYFTS) the chain is Cytoplasmic. The chain crosses the membrane as a helical span at residues 1313 to 1338 (AWNVHDFMVVIFSITGLLLPLTIGQY). Topologically, residues 1339–1341 (FVP) are extracellular. The chain crosses the membrane as a helical span at residues 1342–1362 (PSLVQLILLSRVIHILRPGKG). The Cytoplasmic portion of the chain corresponds to 1363–1377 (PKVFHDLMLPLILAL). A helical membrane pass occupies residues 1378 to 1402 (PALLNISLLIFLVMFIYAIFGMYNF). Over 1403–1420 (AYVKKEAGINDVSNFETF) the chain is Extracellular. An intramembrane region (pore-forming) is located at residues 1421–1444 (GSSMLCLFQVTTFSGWDGMLDAIF). Residues 1445–1468 (NSQWSDCDPDKINPGTQVKGDCGS) are Extracellular-facing. Cysteine 1451 and cysteine 1466 are oxidised to a cystine. A helical transmembrane segment spans residues 1469–1504 (PSVGISYFVSYILISWLIIVNMYIVLIMEFLSIPSQ). Residues 1505–1681 (KKSRTLSEDD…EEKASIQTQI (177 aa)) are Cytoplasmic-facing. Basic and acidic residues predominate over residues 1647 to 1662 (NVSDTPAIDDRRDDLT). Positions 1647 to 1681 (NVSDTPAIDDRRDDLTSKGAHSGKIEEKASIQTQI) are disordered.

It belongs to the sodium channel (TC 1.A.1.10) family. SCN7A subfamily. In terms of assembly, the sodium channel formed by SCN7A is probably a heterooligomeric complex consisting of the ion conducting pore forming alpha subunit SCN7A and regulatory beta subunits such as SCN3B. Interacts with ATP1A1; activates ATP1A1 and thereby indirectly signals to nearby neurons to regulate sodium homeostasis. Not tissue specific but widely expressed. Expressed in regions of the central nervous system that control body fluid ionic balance.

It localises to the cell membrane. It catalyses the reaction Na(+)(in) = Na(+)(out). In terms of biological role, sodium leak channel functioning as an osmosensor regulating sodium ion levels in various tissues and organs. While most sodium channels are voltage-gated, SCN7A is not and lets sodium flow through membrane along its concentration gradient. In glial cells of the central nervous system, senses body-fluid sodium levels and controls salt intake behavior as well as voluntary water intake through activation of nearby neurons to maintain appropriate sodium levels in the body. By mediating sodium influx into keratinocytes, also plays a role in skin barrier homeostasis. In Mus musculus (Mouse), this protein is Sodium channel protein type 7 subunit alpha.